We begin with the raw amino-acid sequence, 130 residues long: Capsid protein (130 aa).

The tract at residues 31–104 is viral RNA-binding; that stretch reads EWLSNNSRSQ…FAATDDVTVI (74 aa).

This sequence belongs to the Leviviricetes capsid protein family. Homodimer. The capsid proteins form dimers that assemble by group of 5. Twelve such pentamers are linked together with free dimers. The homodimers binds to the viral RNA via an operator hairpin, but also to many other RNA sequences in the viral genome; this interaction probably shifts the virus from the replicative to the assembly phase and ensures specific encapsidation of the viral genome.

The protein localises to the virion. Functionally, capsid protein self-assembles to form an icosahedral capsid with a T=3 symmetry, about 26 nm in diameter, and consisting of 89 capsid proteins dimers (178 capsid proteins). Involved in viral genome encapsidation through the interaction between a capsid protein dimer and the multiple packaging signals present in the RNA genome. The capsid also contains 1 copy of the A2 maturation protein. In terms of biological role, acts as a translational repressor of viral replicase synthesis late in infection. This latter function is the result of capsid protein interaction with an RNA hairpin which contains the replicase ribosome-binding site. This is Capsid protein from Escherichia coli (Bacteriophage JP34).